Here is a 755-residue protein sequence, read N- to C-terminus: Proprotein convertase subtilisin/kexin type 4 (755 aa).

An N-terminal signal peptide occupies residues 1–25 (MRPAPIALWLRLVLALALVRPRAVG). The propeptide occupies 26–113 (WAPVRAPIYV…QQTLQRRVKR (88 aa)). Residues 126–440 (QWYMNSEAQP…YGLLDAGLLV (315 aa)) form the Peptidase S8 domain. Catalysis depends on charge relay system residues Asp158, His199, and Ser373. The region spanning 449 to 581 (TQPQRKCAVR…TLLLYGTAED (133 aa)) is the P/Homo B domain. N-linked (GlcNAc...) asparagine glycans are attached at residues Asn475 and Asn629. Residues 709 to 729 (AMVLSLLAVTLGGPVLCGMSM) form a helical membrane-spanning segment.

Belongs to the peptidase S8 family. Furin subfamily. The proPCSK4 form interacts with HSPA5; the interaction takes place at the endoplasmic reticulum. Post-translationally, N-glycosylated. In terms of processing, synthesized in the endoplasmic reticulum as a zymogen, is matured by autocatalytic cleavage between the prodomain and the catalytic domain. As to expression, placenta.

It localises to the membrane. It is found in the cytoplasmic vesicle. Its subcellular location is the secretory vesicle. The protein resides in the acrosome membrane. In terms of biological role, proprotein convertase involved in the processing of hormone and other protein precursors at sites comprised of pairs of basic amino acid residues. In males, important for ADAM2 processing as well as other acrosomal proteins with roles in fertilization and critical for normal fertilization events such as sperm capacitation, acrosome reaction and binding of sperm to zona pellucida. Also plays a role in female fertility, involved in the regulation of trophoblast migration and placental development, may be through the proteolytical processing and activation of proteins such as IGF2. May also participate in folliculogenesis in the ovaries. This is Proprotein convertase subtilisin/kexin type 4 from Homo sapiens (Human).